Consider the following 124-residue polypeptide: Urease subunit beta (124 aa).

It belongs to the urease beta subunit family. In terms of assembly, heterotrimer of UreA (gamma), UreB (beta) and UreC (alpha) subunits. Three heterotrimers associate to form the active enzyme.

The protein localises to the cytoplasm. The catalysed reaction is urea + 2 H2O + H(+) = hydrogencarbonate + 2 NH4(+). The protein operates within nitrogen metabolism; urea degradation; CO(2) and NH(3) from urea (urease route): step 1/1. The sequence is that of Urease subunit beta from Ureaplasma urealyticum serovar 10 (strain ATCC 33699 / Western).